The following is a 107-amino-acid chain: Quaternary ammonium compound-resistance protein QacC (107 aa).

3 consecutive transmembrane segments (helical) span residues 26-46 (FSKF…FYFL), 57-77 (ITYA…SIII), and 84-104 (LITI…NIFG).

This sequence belongs to the drug/metabolite transporter (DMT) superfamily. Small multidrug resistance (SMR) (TC 2.A.7.1) family.

Its subcellular location is the cell membrane. Functionally, multidrug exporter. Is implicated for the resistance to bacteriocidal quaternary ammonium compounds. This chain is Quaternary ammonium compound-resistance protein QacC, found in Staphylococcus sp. (strain ST827).